Reading from the N-terminus, the 1710-residue chain is Centrosomal protein of 152 kDa (1710 aa).

Disordered stretches follow at residues 1–27, 39–79, and 108–139; these read MSLD…YERE, HDML…NEQM, and NRSK…SKCE. Residues 1–60 are interaction with PLK4; that stretch reads MSLDFGSVALPVQNEDEEYDEEDYEREKELQQLLTDLPHDMLDDDLSSPELQYSDCSEDG. Positions 14-24 are enriched in acidic residues; it reads NEDEEYDEEDY. A compositionally biased stretch (basic and acidic residues) spans 108-123; that stretch reads NRSKTEDRHPVYHPEE. A coiled-coil region spans residues 234–490; it reads ENMQIIQLQV…ISLYESAAKL (257 aa). Basic and acidic residues predominate over residues 587–604; it reads DEKSIEVETKTDTSEKPK. A disordered region spans residues 587 to 611; sequence DEKSIEVETKTDTSEKPKNQLWPES. 3 coiled-coil regions span residues 615-664, 700-772, and 902-993; these read DVVR…QDFD, EKQQ…LEKE, and AVSE…INEV. The tract at residues 1120-1142 is disordered; it reads ELSKDSASQGTGQGDPGPAAGHH. Residues 1170-1241 are a coiled coil; it reads HCFQELEKAK…LEELQTLCKT (72 aa). Residue Thr1241 is modified to Phosphothreonine.

It belongs to the CEP152 family. In terms of assembly, interacts (via N-terminus) with PLK4; the interaction is mutally exclusive with a PLK4:CEP192 interaction. Interacts (via C-terminus) with CPAP (via-N-terminus). Interacts with CINP. Interacts with CDK5RAP2, WDR62, CEP63 and CEP131. CEP63, CDK5RAP2, CEP152, WDR62 are proposed to form a stepwise assembled complex at the centrosome forming a ring near parental centrioles. Interacts with DEUP1; this interaction recruits CEP152 to the deuterosome. The interactions with CEP63 and DEUP1 are mutually exclusive. Interacts with CCDC66.

Its subcellular location is the cytoplasm. It is found in the cytoskeleton. The protein localises to the microtubule organizing center. It localises to the centrosome. The protein resides in the centriole. Its function is as follows. Necessary for centrosome duplication; the function also seems to involve CEP63, CDK5RAP2 and WDR62 through a stepwise assembled complex at the centrosome that recruits CDK2 required for centriole duplication. Acts as a molecular scaffold facilitating the interaction of PLK4 and CPAP, 2 molecules involved in centriole formation. Proposed to snatch PLK4 away from PLK4:CEP92 complexes in early G1 daughter centriole and to reposition PLK4 at the outer boundary of a newly forming CEP152 ring structure. Also plays a key role in deuterosome-mediated centriole amplification in multiciliated that can generate more than 100 centrioles. Overexpression of CEP152 can drive amplification of centrioles. The protein is Centrosomal protein of 152 kDa of Homo sapiens (Human).